The following is a 169-amino-acid chain: Benzoate 1,2-dioxygenase subunit beta (169 aa).

It belongs to the bacterial ring-hydroxylating dioxygenase beta subunit family. In terms of assembly, this dioxygenase system consists of three proteins: the two subunits of the hydroxylase (BenA and BenB), and an electron transfer component (BenC).

It catalyses the reaction benzoate + NADH + O2 + H(+) = (1R,6S)-1,6-dihydroxycyclohexa-2,4-diene-1-carboxylate + NAD(+). It participates in aromatic compound metabolism; benzoate degradation via hydroxylation; catechol from benzoate: step 1/2. Degradation of benzoate to 2-hydro-1,2-dihydroxybenzoate (DHB). The beta subunit may be responsible for the substrate specificity of the enzyme. The polypeptide is Benzoate 1,2-dioxygenase subunit beta (benB) (Acinetobacter baylyi (strain ATCC 33305 / BD413 / ADP1)).